The sequence spans 285 residues: (3S)-malyl-CoA thioesterase (285 aa).

Substrate-binding residues include arginine 70 and glutamate 122. Mg(2+)-binding residues include glutamate 122 and aspartate 148.

The protein belongs to the HpcH/HpaI aldolase family. Homodimer or homotrimer. It depends on Mg(2+) as a cofactor.

It catalyses the reaction (S)-malyl-CoA + H2O = (S)-malate + CoA + H(+). In terms of biological role, catalyzes the hydrolysis of (3S)-malyl-CoA to (3S)-malate and free CoA. Inactive towards beta-methylmalyl-CoA and other CoA esters. This chain is (3S)-malyl-CoA thioesterase, found in Cereibacter sphaeroides (strain ATCC 17025 / ATH 2.4.3) (Rhodobacter sphaeroides).